Consider the following 445-residue polypeptide: Argininosuccinate synthase (445 aa).

ATP is bound by residues 17–25 and Ala-43; that span reads AFSGGLDTS. Tyr-99 contacts L-citrulline. Residues Gly-129 and Thr-131 each contribute to the ATP site. 3 residues coordinate L-aspartate: Thr-131, Asn-135, and Asp-136. Asn-135 contributes to the L-citrulline binding site. Asp-136 contacts ATP. Residues Arg-139 and Ser-192 each coordinate L-citrulline. Asp-194 serves as a coordination point for ATP. Positions 201, 203, and 280 each coordinate L-citrulline.

It belongs to the argininosuccinate synthase family. Type 2 subfamily. In terms of assembly, homotetramer.

The protein localises to the cytoplasm. It catalyses the reaction L-citrulline + L-aspartate + ATP = 2-(N(omega)-L-arginino)succinate + AMP + diphosphate + H(+). It functions in the pathway amino-acid biosynthesis; L-arginine biosynthesis; L-arginine from L-ornithine and carbamoyl phosphate: step 2/3. In Afipia carboxidovorans (strain ATCC 49405 / DSM 1227 / KCTC 32145 / OM5) (Oligotropha carboxidovorans), this protein is Argininosuccinate synthase.